A 194-amino-acid chain; its full sequence is uncharacterized protein (194 aa).

Residues 1–24 form the signal peptide; that stretch reads MRKFVAFFVIVALAALLAGCGGQG.

This is an uncharacterized protein from Archaeoglobus fulgidus (strain ATCC 49558 / DSM 4304 / JCM 9628 / NBRC 100126 / VC-16).